The sequence spans 374 residues: Probable tuliposide A-converting enzyme b6, amyloplastic (374 aa).

The N-terminal 68 residues, Met-1 to Thr-68, are a transit peptide targeting the amyloplast. Ser-226 serves as the catalytic Acyl-ester intermediate. Catalysis depends on charge relay system residues Asp-316 and His-348.

This sequence belongs to the AB hydrolase superfamily. In terms of assembly, homodimer.

The protein localises to the plastid. It localises to the amyloplast. It carries out the reaction 6-tuliposide A = tulipalin A + D-glucose. In terms of biological role, lactone-forming carboxylesterases, specifically catalyzing intramolecular transesterification, but not hydrolysis. Involved in the biosynthesis of tulipalins, defensive chemicals that show antimicrobial activities against a broad range of strains of bacteria and fungi. Substrates are 6-tuliposide A &gt; 6-tuliposide B. This Tulipa gesneriana (Garden tulip) protein is Probable tuliposide A-converting enzyme b6, amyloplastic (TCEA-B6).